A 306-amino-acid chain; its full sequence is 2-phospho-L-lactate transferase (306 aa).

Residues D54 and R93 each contribute to the 7,8-didemethyl-8-hydroxy-5-deazariboflavin site.

It belongs to the CofD family. In terms of assembly, homodimer. Mg(2+) serves as cofactor.

It catalyses the reaction (2S)-lactyl-2-diphospho-5'-guanosine + 7,8-didemethyl-8-hydroxy-5-deazariboflavin = oxidized coenzyme F420-0 + GMP + H(+). Its pathway is cofactor biosynthesis; coenzyme F420 biosynthesis. In terms of biological role, catalyzes the transfer of the 2-phospholactate moiety from (2S)-lactyl-2-diphospho-5'-guanosine to 7,8-didemethyl-8-hydroxy-5-deazariboflavin (FO) with the formation of oxidized coenzyme F420-0 and GMP. This is 2-phospho-L-lactate transferase from Methanothermobacter thermautotrophicus (strain ATCC 29096 / DSM 1053 / JCM 10044 / NBRC 100330 / Delta H) (Methanobacterium thermoautotrophicum).